Reading from the N-terminus, the 106-residue chain is Thioredoxin-2 (106 aa).

The Thioredoxin domain maps to 2 to 106 (VYQIKDKADL…RLEDVIKANI (105 aa)). Catalysis depends on nucleophile residues Cys-32 and Cys-35. An intrachain disulfide couples Cys-32 to Cys-35.

The protein belongs to the thioredoxin family.

Functionally, participates in various redox reactions through the reversible oxidation of its active center dithiol to a disulfide and catalyzes dithiol-disulfide exchange reactions. As a reducing substrate of peroxiredoxin 1, thioredoxin 2 is preferred over thioredoxin 1. This is Thioredoxin-2 from Drosophila yakuba (Fruit fly).